Consider the following 450-residue polypeptide: Probable ECA polymerase (450 aa).

11 consecutive transmembrane segments (helical) span residues 6–26, 37–57, 63–83, 118–138, 155–175, 181–201, 207–227, 228–248, 341–361, 378–398, and 410–430; these read FSGL…LTWF, VFFS…TSVL, VGVA…CFYA, VILM…NGFL, GVAL…VYFL, AWLF…MIVG, IIIA…ISLW, MLAA…LKRY, LVVM…GLII, YKAA…IVLA, and VFFI…YWLF.

Belongs to the WzyE family. As to quaternary structure, probably part of a complex composed of WzxE, WzyE and WzzE.

The protein resides in the cell inner membrane. It participates in bacterial outer membrane biogenesis; enterobacterial common antigen biosynthesis. Functionally, probably involved in the polymerization of enterobacterial common antigen (ECA) trisaccharide repeat units. In Shigella flexneri, this protein is Probable ECA polymerase.